The sequence spans 200 residues: 3-isopropylmalate dehydratase small subunit (200 aa).

It belongs to the LeuD family. LeuD type 1 subfamily. In terms of assembly, heterodimer of LeuC and LeuD.

It catalyses the reaction (2R,3S)-3-isopropylmalate = (2S)-2-isopropylmalate. It participates in amino-acid biosynthesis; L-leucine biosynthesis; L-leucine from 3-methyl-2-oxobutanoate: step 2/4. Functionally, catalyzes the isomerization between 2-isopropylmalate and 3-isopropylmalate, via the formation of 2-isopropylmaleate. The chain is 3-isopropylmalate dehydratase small subunit from Pectobacterium atrosepticum (strain SCRI 1043 / ATCC BAA-672) (Erwinia carotovora subsp. atroseptica).